The following is a 230-amino-acid chain: Phosphoribosylaminoimidazole-succinocarboxamide synthase (230 aa).

The protein belongs to the SAICAR synthetase family.

The enzyme catalyses 5-amino-1-(5-phospho-D-ribosyl)imidazole-4-carboxylate + L-aspartate + ATP = (2S)-2-[5-amino-1-(5-phospho-beta-D-ribosyl)imidazole-4-carboxamido]succinate + ADP + phosphate + 2 H(+). It functions in the pathway purine metabolism; IMP biosynthesis via de novo pathway; 5-amino-1-(5-phospho-D-ribosyl)imidazole-4-carboxamide from 5-amino-1-(5-phospho-D-ribosyl)imidazole-4-carboxylate: step 1/2. The sequence is that of Phosphoribosylaminoimidazole-succinocarboxamide synthase from Thermotoga sp. (strain RQ2).